The following is a 364-amino-acid chain: MNADIDDVLALVRPDLQAFAGYSSARSAAVQGEVWLNANESAWANPADAAGNSRRYPEPQPLALREGLAALYGVTPPQLLIGRGSDEAIDLLVRALCVPGRDGVLVTPPVFGMYAVCARLQGAALIEVPLVDTEDGLRADLDAVIDTAKSRNAKLVFLCAPSNPAGSDIALDEIERVATALRGQALVVVDEAYVEYAQRPSAATLLAAHANLAVLRTLSKAHALAAARIGSLIAAPELIAVLRRCQAPYPVPTPCAELAVQALQPAGLARTAERVATVIAERERLFAALPGLPGVRRVYRSAGNYLLVRFADAQAAFDTLLAAGVVVRDQRAAPQLGDALRISIGSPEENDRVLAALSARRAAA.

An N6-(pyridoxal phosphate)lysine modification is found at Lys220.

This sequence belongs to the class-II pyridoxal-phosphate-dependent aminotransferase family. Histidinol-phosphate aminotransferase subfamily. Homodimer. Requires pyridoxal 5'-phosphate as cofactor.

It carries out the reaction L-histidinol phosphate + 2-oxoglutarate = 3-(imidazol-4-yl)-2-oxopropyl phosphate + L-glutamate. It functions in the pathway amino-acid biosynthesis; L-histidine biosynthesis; L-histidine from 5-phospho-alpha-D-ribose 1-diphosphate: step 7/9. The protein is Histidinol-phosphate aminotransferase of Stenotrophomonas maltophilia (strain R551-3).